Here is a 160-residue protein sequence, read N- to C-terminus: Ribosomal RNA large subunit methyltransferase H (160 aa).

S-adenosyl-L-methionine contacts are provided by residues leucine 77, glycine 109, and 128–133 (FSRLTF).

Belongs to the RNA methyltransferase RlmH family. Homodimer.

The protein resides in the cytoplasm. The catalysed reaction is pseudouridine(1915) in 23S rRNA + S-adenosyl-L-methionine = N(3)-methylpseudouridine(1915) in 23S rRNA + S-adenosyl-L-homocysteine + H(+). In terms of biological role, specifically methylates the pseudouridine at position 1915 (m3Psi1915) in 23S rRNA. This chain is Ribosomal RNA large subunit methyltransferase H, found in Desulfitobacterium hafniense (strain DSM 10664 / DCB-2).